A 692-amino-acid chain; its full sequence is UvrABC system protein C (692 aa).

The GIY-YIG domain maps to 16 to 95 (ETPGVYRFRD…IKEFDPRFNV (80 aa)). A UVR domain is found at 208–243 (GRYLRRLEREMRAAAEAQEYERAARLRDDIGALRRA). Positions 492-511 (GELEEYPGAPTGDDEAPETG) are disordered.

Belongs to the UvrC family. In terms of assembly, interacts with UvrB in an incision complex.

The protein localises to the cytoplasm. Functionally, the UvrABC repair system catalyzes the recognition and processing of DNA lesions. UvrC both incises the 5' and 3' sides of the lesion. The N-terminal half is responsible for the 3' incision and the C-terminal half is responsible for the 5' incision. The protein is UvrABC system protein C of Parafrankia sp. (strain EAN1pec).